Consider the following 195-residue polypeptide: Shikimate kinase (195 aa).

33–38 contacts ATP; that stretch reads GAGKTT. Position 37 (threonine 37) interacts with Mg(2+). Substrate is bound by residues aspartate 55, arginine 79, and glycine 101. Arginine 139 is an ATP binding site. Arginine 158 provides a ligand contact to substrate. Residue arginine 175 coordinates ATP.

This sequence belongs to the shikimate kinase family. In terms of assembly, monomer. The cofactor is Mg(2+).

The protein localises to the cytoplasm. It carries out the reaction shikimate + ATP = 3-phosphoshikimate + ADP + H(+). Its pathway is metabolic intermediate biosynthesis; chorismate biosynthesis; chorismate from D-erythrose 4-phosphate and phosphoenolpyruvate: step 5/7. In terms of biological role, catalyzes the specific phosphorylation of the 3-hydroxyl group of shikimic acid using ATP as a cosubstrate. This is Shikimate kinase from Nitrosospira multiformis (strain ATCC 25196 / NCIMB 11849 / C 71).